The sequence spans 607 residues: Condensin-2 complex subunit H2 (607 aa).

Phosphothreonine is present on Thr-19. Ser-95, Ser-231, Ser-235, and Ser-252 each carry phosphoserine. Disordered stretches follow at residues 211-312 (YPMS…WQSL) and 325-347 (KGKP…KRKG). Positions 254 to 263 (GEEDAEDGAE) are enriched in acidic residues. Ser-494 is modified (phosphoserine).

The protein belongs to the CND2 H2 (condensin-2 subunit 2) family. Component of the condensin-2 complex, which contains the SMC2 and SMC4 heterodimer, and three non SMC subunits, NCAPG2, NCAPH2 and NCAPD3 that probably regulate the complex.

It is found in the nucleus. Functionally, regulatory subunit of the condensin-2 complex, a complex that seems to provide chromosomes with an additional level of organization and rigidity and in establishing mitotic chromosome architecture. May promote the resolution of double-strand DNA catenanes (intertwines) between sister chromatids. Condensin-mediated compaction likely increases tension in catenated sister chromatids, providing directionality for type II topoisomerase-mediated strand exchanges toward chromatid decatenation. Required for decatenation of chromatin bridges at anaphase. Early in neurogenesis, may play an essential role to ensure accurate mitotic chromosome condensation in neuron stem cells, ultimately affecting neuron pool and cortex size. Seems to have lineage-specific role in T-cell development. The polypeptide is Condensin-2 complex subunit H2 (Mus musculus (Mouse)).